Reading from the N-terminus, the 98-residue chain is Ribonuclease kappa (98 aa).

2 consecutive transmembrane segments (helical) span residues 13–33 and 65–85; these read ACGI…GIFF and VSYN…FSFC.

This sequence belongs to the RNase K family. As to quaternary structure, interacts with the proton translocation complex V0 of the V-ATPase. Interacts with ATP6AP1. Expressed in brain (at protein level).

It is found in the endomembrane system. The protein localises to the cytoplasmic vesicle. The protein resides in the clathrin-coated vesicle membrane. In terms of biological role, endoribonuclease which preferentially cleaves ApU and ApG phosphodiester bonds. Hydrolyzes UpU bonds at a lower rate. Regulates the activity of vacuolar (H+)-ATPase (V-ATPase) which is responsible for acidifying and maintaining the pH of intracellular compartments. Required at an early stage of receptor-mediated endocytosis. This Bos taurus (Bovine) protein is Ribonuclease kappa (RNASEK).